Reading from the N-terminus, the 265-residue chain is Small ribosomal subunit protein uS5 (265 aa).

Residues 1 to 15 show a composition bias toward low complexity; the sequence is MADTQPAQEAPAADA. The interval 1–44 is disordered; sequence MADTQPAQEAPAADAPRAERNFGRGRGGRGGRGRGRGGPGEEKE. A compositionally biased stretch (basic residues) spans 26–35; it reads RGGRGGRGRG. The region spanning 88–151 is the S5 DRBM domain; that stretch reads LHDEMMKIYP…IAAKLNIVPV (64 aa). Residues 245-265 are disordered; the sequence is TEPSRDPTDEHGELLAEMTTA. Positions 246–258 are enriched in basic and acidic residues; sequence EPSRDPTDEHGEL.

The protein belongs to the universal ribosomal protein uS5 family.

In terms of biological role, component of the ribosome, a large ribonucleoprotein complex responsible for the synthesis of proteins in the cell. The small ribosomal subunit (SSU) binds messenger RNAs (mRNAs) and translates the encoded message by selecting cognate aminoacyl-transfer RNA (tRNA) molecules. The large subunit (LSU) contains the ribosomal catalytic site termed the peptidyl transferase center (PTC), which catalyzes the formation of peptide bonds, thereby polymerizing the amino acids delivered by tRNAs into a polypeptide chain. The nascent polypeptides leave the ribosome through a tunnel in the LSU and interact with protein factors that function in enzymatic processing, targeting, and the membrane insertion of nascent chains at the exit of the ribosomal tunnel. Plays a role in the assembly and function of the 40S ribosomal subunit. Mutations in this protein affects the control of translational fidelity. Involved in nucleolar processing of pre-18S ribosomal RNA and ribosome assembly. The polypeptide is Small ribosomal subunit protein uS5 (Leishmania amazonensis).